A 285-amino-acid polypeptide reads, in one-letter code: 4-diphosphocytidyl-2-C-methyl-D-erythritol kinase (285 aa).

Lys10 is a catalytic residue. Residue 92-102 (PFGAGLGGGSS) participates in ATP binding. The active site involves Asp134.

It belongs to the GHMP kinase family. IspE subfamily.

The catalysed reaction is 4-CDP-2-C-methyl-D-erythritol + ATP = 4-CDP-2-C-methyl-D-erythritol 2-phosphate + ADP + H(+). The protein operates within isoprenoid biosynthesis; isopentenyl diphosphate biosynthesis via DXP pathway; isopentenyl diphosphate from 1-deoxy-D-xylulose 5-phosphate: step 3/6. Functionally, catalyzes the phosphorylation of the position 2 hydroxy group of 4-diphosphocytidyl-2C-methyl-D-erythritol. The chain is 4-diphosphocytidyl-2-C-methyl-D-erythritol kinase from Chloroherpeton thalassium (strain ATCC 35110 / GB-78).